Reading from the N-terminus, the 434-residue chain is Putative nuclease OPG089 (434 aa).

Belongs to the XPG/RAD2 endonuclease family. FEN1 subfamily. The cofactor is Mg(2+).

The protein localises to the virion. Putative nuclease that seems to be required for double-strand break repair, homologous recombination, and production of full-length viral genomic DNA. The chain is Putative nuclease OPG089 (OPG089) from Monkeypox virus.